Consider the following 338-residue polypeptide: Methionine import ATP-binding protein MetN 1 (338 aa).

Residues 2–241 enclose the ABC transporter domain; that stretch reads IEVRSVTKRF…PHSELGVGLL (240 aa). Position 38 to 45 (38 to 45) interacts with ATP; it reads GQSGAGKT.

This sequence belongs to the ABC transporter superfamily. Methionine importer (TC 3.A.1.24) family. As to quaternary structure, the complex is composed of two ATP-binding proteins (MetN), two transmembrane proteins (MetI) and a solute-binding protein (MetQ).

It localises to the cell membrane. The enzyme catalyses L-methionine(out) + ATP + H2O = L-methionine(in) + ADP + phosphate + H(+). It catalyses the reaction D-methionine(out) + ATP + H2O = D-methionine(in) + ADP + phosphate + H(+). In terms of biological role, part of the ABC transporter complex MetNIQ involved in methionine import. Responsible for energy coupling to the transport system. The protein is Methionine import ATP-binding protein MetN 1 of Rhodococcus jostii (strain RHA1).